The sequence spans 434 residues: MTTDSPTLSLSPGLDHRALAKAAQRVDELLDGLPSPSARTPAQREAASSALDEIRAARTEYVEAHAEEIYDRLTDGRTRYLRLDELVRAAASAYPGLVPTEAQMAAERSRRQAEKEGREIDQGIFLRGILSAPKAGPHLLDAMLRPTARALELLPEFVETGVVRMEAASLERRDGVAYLTLCRDDCLNAEDAQQVDDMETAVDLALLDPAVRVGMLRGGVMSHPRYAGRRVFCAGINLKKLSSGDIPLVDFLLRRELGYIHKIVRGVATDGSWRARVIDKPWLAAVDSFAIGGGAQLLLVFDHVVAASDAYFSLPAATEGIIPGAANYRLSRFTGPRLARQVILGGRRITADEPDARLLVDQVVPPEEMDAAIESALAALDGDAVRANRRMVNLAEEPPDGFRRYMAEFALQQALRIYGADVIGKVGGFAAGSR.

Substrate-binding positions include Asp184, Glu190, 223 to 226 (HPRY), 234 to 239 (AGINLK), Gly293, 322 to 324 (IPG), and Gln413.

Belongs to the enoyl-CoA hydratase/isomerase family. In terms of assembly, homohexamer; dimer of trimers.

It catalyses the reaction (3,5-dihydroxyphenyl)acetyl-CoA + O2 = 2-(3,5-dihydroxyphenyl)-2-oxoacetate + CoA + H(+). Functionally, involved in the biosynthesis of the nonproteinogenic amino acid monomer (S)-3,5-dihydroxyphenylglycine (Dpg) responsible of the production of vancomycin and teicoplanin antibiotics. Catalyzes the unusual conversion 3,5-dihydroxyphenylacetyl-CoA (DPA-CoA) to 3,5-dihydroxyphenylglyoxylate. DpgC performed a net four-electron oxidation of the benzylic carbon of DPA-CoA and the hydrolysis of the thioester bond to generate free CoA. It can also use phenylacetyl-CoA (PA-CoA) as substrate. The polypeptide is (3,5-dihydroxyphenyl)acetyl-CoA 1,2-dioxygenase (dpgC) (Amycolatopsis orientalis (Nocardia orientalis)).